We begin with the raw amino-acid sequence, 515 residues long: MSSTKKPLVLTILDGYGHREEQQDNAILNAKTPVMDVLWQQQPHTLIAASGLDVGLPDGQMGNSEVGHVNLGAGRIVYQDLTRLDKEIKEGDFFTNPTLTAAVDNAVKTGKAVHIMGLLSAGGVHSHEDHIMAMVELAAKRGATAIYLHAFLDGRDTPPRSAESSLKRFTAKFAELGNGRIASIIGRYYAMDRDNRWDRVQLAYDLLTQAKGEFTADNAVAGLQAAYARGENDEFVKPTVIQATGEADAAMNEGDTLIFMNFRADRARQITRTFVNADFDGFKRDKVVNFGDFIMLTEYAADIKVACAYPPASLTNTFGEWLMKHDKTQLRISETEKYAHVTFFYNGGVEEPFKGEDRILINSPKVATYDLQPEMSSAELTEKLVSAIGSGKYDVIICNYPNGDMVGHTGDYDAAVKAVETLDNCIEQVVAAVKAADGQLLITADHGNAEQMRDPATGQAHTAHTSLPVPLIYVGNKAVKAVEGGKLSDIAPTMLSLMEMEIPQEMTGKPLFIVE.

Mn(2+) is bound by residues Asp14 and Ser64. Ser64 acts as the Phosphoserine intermediate in catalysis. Residues His125, 155-156, Arg187, Arg193, 263-266, and Lys337 contribute to the substrate site; these read RD and RADR. 5 residues coordinate Mn(2+): Asp404, His408, Asp445, His446, and His464.

Belongs to the BPG-independent phosphoglycerate mutase family. As to quaternary structure, monomer. Mn(2+) serves as cofactor.

It catalyses the reaction (2R)-2-phosphoglycerate = (2R)-3-phosphoglycerate. Its pathway is carbohydrate degradation; glycolysis; pyruvate from D-glyceraldehyde 3-phosphate: step 3/5. Catalyzes the interconversion of 2-phosphoglycerate and 3-phosphoglycerate. This is 2,3-bisphosphoglycerate-independent phosphoglycerate mutase from Yersinia pseudotuberculosis serotype I (strain IP32953).